Here is a 481-residue protein sequence, read N- to C-terminus: MADKITARNEDYSQWYIDLVRSAKLADYSDVRGCMVIRPNGYAIWEKMQAALDRMFKETGHVNAYFPLFIPESFIAKEAEHIEGFAPECAVVTHGGGEELAEKLYVRPTSETIIWSSYKKWIQSYRDLPILINQWANVVRWEMRTRLFLRTTEFLWQEGHTAHATPEESQEEVMRMINVYRTFAEEYMAMPVIMGRKTDSEKFAGAEETYCIEAMMQDGKALQAGTSHNLGQNFAKAFDCQFQTKDSRLDYVWATSWGVSTRLIGALIMAHSDDRGLVLPPKLASRQVVIIPILRGDKAAVLEQADAMAASLKAAGIPAFVDGSEQNSPGWKFAEYELQGIPVRIEVGPRDIEKGICIAARRDTLEKSELQLGETLPGAVQEILDAMQKDMYQKALLFREENTVEASSYEEFKAAVEKGFVIAHWDGTAETEEKIKEETKATIRVLPEEDGYIERYRMNEPGTCIYSGKPAAQKVVFAKAY.

This sequence belongs to the class-II aminoacyl-tRNA synthetase family. ProS type 3 subfamily. Homodimer.

It is found in the cytoplasm. The catalysed reaction is tRNA(Pro) + L-proline + ATP = L-prolyl-tRNA(Pro) + AMP + diphosphate. Its function is as follows. Catalyzes the attachment of proline to tRNA(Pro) in a two-step reaction: proline is first activated by ATP to form Pro-AMP and then transferred to the acceptor end of tRNA(Pro). This chain is Proline--tRNA ligase, found in Chlorobium luteolum (strain DSM 273 / BCRC 81028 / 2530) (Pelodictyon luteolum).